The following is a 379-amino-acid chain: Nitric oxide reductase FlRd-NAD(+) reductase (379 aa).

It belongs to the FAD-dependent oxidoreductase family. The cofactor is FAD.

Its subcellular location is the cytoplasm. The enzyme catalyses 2 reduced [nitric oxide reductase rubredoxin domain] + NAD(+) + H(+) = 2 oxidized [nitric oxide reductase rubredoxin domain] + NADH. The protein operates within nitrogen metabolism; nitric oxide reduction. One of at least two accessory proteins for anaerobic nitric oxide (NO) reductase. Reduces the rubredoxin moiety of NO reductase. This Pectobacterium atrosepticum (strain SCRI 1043 / ATCC BAA-672) (Erwinia carotovora subsp. atroseptica) protein is Nitric oxide reductase FlRd-NAD(+) reductase.